A 443-amino-acid chain; its full sequence is Carbohydrate sulfotransferase 9 (443 aa).

Residues 1-12 are Cytoplasmic-facing; it reads MQPSEMVMNPKQ. Residues 13–33 traverse the membrane as a helical; Signal-anchor for type II membrane protein segment; it reads VFLSVLIFGVAGLLLFMYLQV. At 34–443 the chain is on the lumenal side; it reads WIEEQHTGRV…LMFNYTTPFL (410 aa). The span at 108–128 shows a compositional bias: polar residues; that stretch reads LTKTSHSQGGDQALSKSTGSP. The disordered stretch occupies residues 108 to 132; the sequence is LTKTSHSQGGDQALSKSTGSPTEKL. N-linked (GlcNAc...) asparagine glycosylation is present at N159. Position 220–226 (220–226) interacts with 3'-phosphoadenylyl sulfate; it reads PKAGCSN. N243 carries an N-linked (GlcNAc...) asparagine glycan. 280–288 lines the 3'-phosphoadenylyl sulfate pocket; the sequence is RDPMERLVS. N-linked (GlcNAc...) asparagine glycosylation is found at N324 and N437.

This sequence belongs to the sulfotransferase 2 family. As to expression, highly expressed in trachea. Also expressed in fetal lung, adult pancreas, testis and salivary gland. Expressed at low level in pituitary gland, apex of the heart, adult lung, prostate and mammary gland. Weakly or not expressed in heart, liver and spinal cord.

Its subcellular location is the golgi apparatus membrane. It is found in the secreted. Functionally, catalyzes the transfer of sulfate to position 4 of non-reducing N-acetylgalactosamine (GalNAc) residues in both N-glycans and O-glycans. Participates in biosynthesis of glycoprotein hormones lutropin and thyrotropin, by mediating sulfation of their carbohydrate structures. Has a higher activity toward carbonic anhydrase VI than toward lutropin. Only active against terminal GalNAcbeta1,GalNAcbeta. Isoform 2, but not isoform 1, is active toward chondroitin. The protein is Carbohydrate sulfotransferase 9 (CHST9) of Homo sapiens (Human).